Consider the following 1516-residue polypeptide: Alpha-2-macroglobulin homolog (1516 aa).

Positions 1 to 26 (MSNLRRFSRSLAVAALVLLPFAAVQA) are cleaved as a signal peptide.

The protein belongs to the protease inhibitor I39 (alpha-2-macroglobulin) family. Bacterial alpha-2-macroglobulin subfamily.

In Pseudomonas aeruginosa (strain ATCC 15692 / DSM 22644 / CIP 104116 / JCM 14847 / LMG 12228 / 1C / PRS 101 / PAO1), this protein is Alpha-2-macroglobulin homolog.